The sequence spans 354 residues: MKKIVLTGGGTAGHVTPNIALLPSLKEAGYEVFYIGSYTGIEKTLIEDLGIPYYGISSGKLRRYRSLKNLSDPFRVLHGLFQAKRLMKKIKPDIVFSKGGFVSVPVVLAAGSRHIPVIIHESDMTPGLANKIAMRKATKICCNFPETLKYLPEGKAVLTGSPIRQELLLGNKAAGLDLCNFTTDKPIILVVGGSTGAVHVNDAVRSILPELLKDFQVVHLCGKGKMDDSLNGTPGYVQFEYISEQMRDLFAISSIVISRAGANAICELLALKKPNLLIPLSANASRGDQILNANSFKEHGYSMVLTEEDMNKDTLLAAVRKLYADRHQYIINMEKSEQQDSIDKIMNLIKDNSK.

Residues 11–13 (TAG), R164, S194, and Q289 each bind UDP-N-acetyl-alpha-D-glucosamine.

It belongs to the glycosyltransferase 28 family. MurG subfamily.

It is found in the cell membrane. The enzyme catalyses di-trans,octa-cis-undecaprenyl diphospho-N-acetyl-alpha-D-muramoyl-L-alanyl-D-glutamyl-meso-2,6-diaminopimeloyl-D-alanyl-D-alanine + UDP-N-acetyl-alpha-D-glucosamine = di-trans,octa-cis-undecaprenyl diphospho-[N-acetyl-alpha-D-glucosaminyl-(1-&gt;4)]-N-acetyl-alpha-D-muramoyl-L-alanyl-D-glutamyl-meso-2,6-diaminopimeloyl-D-alanyl-D-alanine + UDP + H(+). The protein operates within cell wall biogenesis; peptidoglycan biosynthesis. Cell wall formation. Catalyzes the transfer of a GlcNAc subunit on undecaprenyl-pyrophosphoryl-MurNAc-pentapeptide (lipid intermediate I) to form undecaprenyl-pyrophosphoryl-MurNAc-(pentapeptide)GlcNAc (lipid intermediate II). In Lachnospira eligens (strain ATCC 27750 / DSM 3376 / VPI C15-48 / C15-B4) (Eubacterium eligens), this protein is UDP-N-acetylglucosamine--N-acetylmuramyl-(pentapeptide) pyrophosphoryl-undecaprenol N-acetylglucosamine transferase.